Reading from the N-terminus, the 122-residue chain is Large ribosomal subunit protein uL14 (122 aa).

Belongs to the universal ribosomal protein uL14 family. Part of the 50S ribosomal subunit. Forms a cluster with proteins L3 and L19. In the 70S ribosome, L14 and L19 interact and together make contacts with the 16S rRNA in bridges B5 and B8. Can interact with ribosomal silencing factor RsfS, which may inhibit ribosomal subunit association.

Binds to 23S rRNA. Forms part of two intersubunit bridges in the 70S ribosome. This is Large ribosomal subunit protein uL14 from Synechocystis sp. (strain ATCC 27184 / PCC 6803 / Kazusa).